We begin with the raw amino-acid sequence, 276 residues long: MAIKKYKPTTNGCRNMSVSAFSEITTQTPEKRLLVSHKDQAGRNNQGKITVRHRGGGVKRKYRLIDFKRNKDNIVGKVATIEYDPNRSANIALIHYLDGEKRYILAPKGLTVGMQIVSGKEADIKVANCLSLMNIPVGTTVHNIELKPGKGGQIARSAGSFCQIISREDKYVLLRLQSGEVPKVLGTCRATIGEIGNESYKLINYGKAGKKRFLGIRPTVRGSAMNPNDHPHGGGEGRAPIGRKSPMTPWGKKARGVKTRDRKKASNALIIRRRTK.

A disordered region spans residues 221–276 (RGSAMNPNDHPHGGGEGRAPIGRKSPMTPWGKKARGVKTRDRKKASNALIIRRRTK). The segment covering 252 to 276 (KKARGVKTRDRKKASNALIIRRRTK) has biased composition (basic residues).

Belongs to the universal ribosomal protein uL2 family. As to quaternary structure, part of the 50S ribosomal subunit. Forms a bridge to the 30S subunit in the 70S ribosome.

In terms of biological role, one of the primary rRNA binding proteins. Required for association of the 30S and 50S subunits to form the 70S ribosome, for tRNA binding and peptide bond formation. It has been suggested to have peptidyltransferase activity; this is somewhat controversial. Makes several contacts with the 16S rRNA in the 70S ribosome. The polypeptide is Large ribosomal subunit protein uL2 (Aster yellows phytoplasma).